The primary structure comprises 165 residues: Neurotrophin-3 (165 aa).

Residues 1 to 3 (IQS) form the signal peptide. The propeptide occupies 4-119 (TSMDQGSLSE…VLNQTSRRKR (116 aa)). The N-linked (GlcNAc...) asparagine glycan is linked to asparagine 112.

It belongs to the NGF-beta family.

Its subcellular location is the secreted. In terms of biological role, seems to promote the survival of visceral and proprioceptive sensory neurons. This chain is Neurotrophin-3 (NTF3), found in Morelia spilota (Carpet python).